The following is a 481-amino-acid chain: GDP-fucose protein O-fucosyltransferase 3 (481 aa).

At 1-8 (MVRFQRRK) the chain is on the cytoplasmic side. Residues 9–31 (LLASCLCVTATVFLMVTLQVVVE) traverse the membrane as a helical; Signal-anchor for type II membrane protein segment. The Lumenal portion of the chain corresponds to 32–481 (LGKFERKKLK…EEFWALVFKD (450 aa)). Asn110, Asn168, and Asn318 each carry an N-linked (GlcNAc...) asparagine glycan. An intrachain disulfide couples Cys389 to Cys392. Asn468 carries N-linked (GlcNAc...) asparagine glycosylation.

Belongs to the glycosyltransferase 10 family. As to expression, widely expressed, with a higher expression in liver and thymus.

The protein resides in the endoplasmic reticulum membrane. It carries out the reaction L-threonyl-[protein] + GDP-beta-L-fucose = 3-O-(alpha-L-fucosyl)-L-threonyl-[protein] + GDP + H(+). The catalysed reaction is L-seryl-[protein] + GDP-beta-L-fucose = 3-O-(alpha-L-fucosyl)-L-seryl-[protein] + GDP + H(+). The protein operates within protein modification; protein glycosylation. Protein O-fucosyltransferase that specifically catalyzes O-fucosylation of serine or threonine residues in EMI domains of target proteins, such as MMRN1, MMRN2 and EMID1. Attaches fucose through an O-glycosidic linkage. O-fucosylation of EMI domain-containing proteins may be required for facilitating protein folding and secretion. May also show alpha-(1,3)-fucosyltransferase activity toward the innermost N-acetyl glucosamine (GlcNAc) residue in biantennary N-glycan acceptors. However, this was tested with a library of synthetic substrates and this activity is unsure in vivo. May be involved in biosynthesis of Lewis X-carrying biantennary N-glycans that regulate neuron stem cell self-renewal during brain development. The polypeptide is GDP-fucose protein O-fucosyltransferase 3 (Mus musculus (Mouse)).